A 308-amino-acid polypeptide reads, in one-letter code: Eukaryotic translation initiation factor 3 subunit G-A (308 aa).

Disordered stretches follow at residues 1–35 (MPTG…KPDP) and 177–226 (TGDK…ADDN). The span at 185–194 (GAEPEPAQAP) shows a compositional bias: low complexity. The span at 209–226 (GGSRRGESMQPNRRADDN) shows a compositional bias: basic and acidic residues. Positions 227–305 (ATIRVTNLSE…LILNVEWAKP (79 aa)) constitute an RRM domain.

Belongs to the eIF-3 subunit G family. As to quaternary structure, component of the eukaryotic translation initiation factor 3 (eIF-3) complex, which is composed of 13 subunits: eif3a, eif3b, eif3c, eif3d, eif3e, eif3f, eif3g, eif3h, eif3i, eif3j, eif3k, eif3l and eif3m.

Its subcellular location is the cytoplasm. RNA-binding component of the eukaryotic translation initiation factor 3 (eIF-3) complex, which is involved in protein synthesis of a specialized repertoire of mRNAs and, together with other initiation factors, stimulates binding of mRNA and methionyl-tRNAi to the 40S ribosome. The eIF-3 complex specifically targets and initiates translation of a subset of mRNAs involved in cell proliferation. This subunit can bind 18S rRNA. The chain is Eukaryotic translation initiation factor 3 subunit G-A (eif3g-a) from Xenopus laevis (African clawed frog).